Here is a 405-residue protein sequence, read N- to C-terminus: Bestrophin homolog 14 (405 aa).

The next 4 helical transmembrane spans lie at 28–48 (LIGF…LLDE), 63–83 (IGAQ…LIVA), 223–243 (LVYT…CLIG), and 256–276 (EITI…LGWL).

It belongs to the anion channel-forming bestrophin (TC 1.A.46) family. Calcium-sensitive chloride channel subfamily.

The protein localises to the membrane. The protein is Bestrophin homolog 14 (best-14) of Caenorhabditis elegans.